A 599-amino-acid polypeptide reads, in one-letter code: Elongation factor 4 (599 aa).

One can recognise a tr-type G domain in the interval 4–186 (EHIRNFSIIA…EIVKKIPPPQ (183 aa)). Residues 16-21 (DHGKST) and 133-136 (NKID) contribute to the GTP site.

Belongs to the TRAFAC class translation factor GTPase superfamily. Classic translation factor GTPase family. LepA subfamily.

The protein localises to the cell inner membrane. It catalyses the reaction GTP + H2O = GDP + phosphate + H(+). Its function is as follows. Required for accurate and efficient protein synthesis under certain stress conditions. May act as a fidelity factor of the translation reaction, by catalyzing a one-codon backward translocation of tRNAs on improperly translocated ribosomes. Back-translocation proceeds from a post-translocation (POST) complex to a pre-translocation (PRE) complex, thus giving elongation factor G a second chance to translocate the tRNAs correctly. Binds to ribosomes in a GTP-dependent manner. The chain is Elongation factor 4 from Geobacter sp. (strain M21).